Reading from the N-terminus, the 548-residue chain is Membrane-associated tyrosine- and threonine-specific cdc2-inhibitory kinase (548 aa).

A disordered region spans residues 61-89; the sequence is PNKQRSWSQPRPQSVSFRSPQNKTPASKL. Positions 63–85 are enriched in polar residues; it reads KQRSWSQPRPQSVSFRSPQNKTP. In terms of domain architecture, Protein kinase spans 103–353; the sequence is FKSICKLGRG…VDWLLSLPAI (251 aa). ATP is bound by residues 109 to 117 and lysine 132; that span reads LGRGSFGEV. Aspartate 226 acts as the Proton acceptor in catalysis. Residues asparagine 231, aspartate 244, and glycine 246 each coordinate Mg(2+). The Membrane-association motif motif lies at 376-392; that stretch reads VYQFIVWLLSFVFQWLN. The interval 464–523 is disordered; it reads SPDLLSRPSLGSTSTPRNLSPEFSMRKRSALPLTPNVSRISQDSTGKSRSPSTSHSSSGF. Over residues 472–481 the composition is skewed to polar residues; it reads SLGSTSTPRN. Threonine 478 bears the Phosphothreonine; by CDK1 mark. Residues 507–521 show a composition bias toward low complexity; that stretch reads STGKSRSPSTSHSSS.

The protein belongs to the protein kinase superfamily. Ser/Thr protein kinase family. WEE1 subfamily. As to quaternary structure, interacts with CDC2-CCNB1 complex. Interacts with Mos during oocyte maturation. In terms of processing, autophosphorylated. Phosphorylated on undefined residues by RSK2 and Mos kinases. Phosphorylation at Thr-478 by cdk1 creates a docking site for plk1/plx1, leading to subsequent phosphorylation by plk1/plk1 and inhibition of the protein kinase activity kinase activity.

The protein localises to the endoplasmic reticulum membrane. The protein resides in the golgi apparatus membrane. It catalyses the reaction L-seryl-[protein] + ATP = O-phospho-L-seryl-[protein] + ADP + H(+). The catalysed reaction is L-threonyl-[protein] + ATP = O-phospho-L-threonyl-[protein] + ADP + H(+). Its activity is regulated as follows. Negatively regulated by hyperphosphorylation during mitosis. The plk1/plk1 protein kinase may be required for mitotic phosphorylation. Inactivated during oocyte maturation by phosphorylation by RSK2 and Mos kinase. Acts as a negative regulator of entry into mitosis (G2 to M transition) by phosphorylation of the CDK1 kinase specifically when CDK1 is complexed to cyclins. Mediates phosphorylation of CDK1 predominantly on 'Thr-14'. Also involved in Golgi fragmentation. May be involved in phosphorylation of CDK1 on 'Tyr-15' to a lesser degree, however tyrosine kinase activity is unclear and may be indirect. This chain is Membrane-associated tyrosine- and threonine-specific cdc2-inhibitory kinase (pkmyt1), found in Xenopus laevis (African clawed frog).